A 782-amino-acid chain; its full sequence is LPS-assembly protein LptD (782 aa).

An N-terminal signal peptide occupies residues 1–23; the sequence is MNKKHTLISLAILTALYSQQSLA.

Belongs to the LptD family. In terms of assembly, component of the lipopolysaccharide transport and assembly complex. Interacts with LptE and LptA.

Its subcellular location is the cell outer membrane. Together with LptE, is involved in the assembly of lipopolysaccharide (LPS) at the surface of the outer membrane. In Haemophilus influenzae (strain ATCC 51907 / DSM 11121 / KW20 / Rd), this protein is LPS-assembly protein LptD.